The sequence spans 430 residues: Inner membrane transport protein YbaT (430 aa).

The Cytoplasmic portion of the chain corresponds to 1–14 (MMNTEGNNGNKPLG). Residues 15 to 35 (LWNVVSIGIGAMVGAGIFALL) traverse the membrane as a helical segment. At 36–38 (GQA) the chain is on the periplasmic side. The chain crosses the membrane as a helical span at residues 39-59 (ALLMEASTWVAFAFGGIVAMF). Over 60–88 (SGYAYARLGASYPSNGGIIDFFRRGLGNG) the chain is Cytoplasmic. A helical transmembrane segment spans residues 89–109 (VFSLALSLLYLLTLAVSIAMV). The Periplasmic portion of the chain corresponds to 110–128 (ARAFGAYAVQFLHEGSQEE). The helical transmembrane segment at 129–149 (HLILLYALGIIAVMTLFNSLS) threads the bilayer. Topologically, residues 150–157 (NHAVGRLE) are cytoplasmic. The chain crosses the membrane as a helical span at residues 158 to 178 (VILVGIKMMILLLLIIAGVWS). The Periplasmic segment spans residues 179–192 (LQPAHISVSAPPSS). Residues 193-213 (GAFFSCIGITFLAYAGFGMMA) form a helical membrane-spanning segment. Residues 214–228 (NAADKVKDPQVIMPR) are Cytoplasmic-facing. Residues 229–249 (AFLVAIGVTTLLYISLALVLL) form a helical membrane-spanning segment. Topologically, residues 250–272 (SDVSALELEKYADTAVAQAASPL) are periplasmic. The chain crosses the membrane as a helical span at residues 273–293 (LGHVGYVIVVIGALLATASAI). Residues 294-325 (NANLFAVFNIMDNMGSERELPKLMNKSLWRQS) are Cytoplasmic-facing. A helical membrane pass occupies residues 326–346 (TWGNIIVVVLIMLMTAALNLG). Position 347 (Ser-347) is a topological domain, periplasmic. Residues 348-368 (LASVASATFLICYLAVFVVAI) form a helical membrane-spanning segment. Residues 369-379 (RLRHDIHASLP) lie on the Cytoplasmic side of the membrane. The chain crosses the membrane as a helical span at residues 380–400 (ILIVGTLVMLLVIVGFIYSLW). Residues 401 to 403 (SQG) are Periplasmic-facing. A helical membrane pass occupies residues 404–424 (SRALIWIIGSLLLSLIVAMVM). The Cytoplasmic segment spans residues 425-430 (KRNKTV).

It belongs to the amino acid-polyamine-organocation (APC) superfamily.

It is found in the cell inner membrane. Probable amino-acid or metabolite transport protein. In Escherichia coli (strain K12), this protein is Inner membrane transport protein YbaT (ybaT).